The chain runs to 444 residues: METAIEDAGLDRGPTLTSSWDAACGALTQSLFLTRTGPRAQDLDFEQLLEPPAPSQDPVSLKSSLSPRDENPCFIYLNCGPNGGEEILSVGVLSSARNMEVYLGEEYCGTSRGKTACTVLDDSEHEKILLYKKYLKLDSPTHACKIKLLSFGEKQCVLVSKVVVHLRPRSADPSPRSAALGSRIDLDNIQTIMESMGSRLSPGAQQLMSMIRFQQQNRLPIGDQLQSVLGSAGHKHLMALQSSPSPAVLDKASSTPFPFRTGLTPSAITENLKALIDKSAQPSGEGNTTNHDEGHLMPQNHSLESDLKNAVSSFLPKKASGSSSVPSSELLPFLQNLCSQVNHLRVGHNARWQENISKPREGMVGVPMEEQPVCSYLEKILSKNMELMEKKLMDHIDERIYQLQEHIDAKMALLVDLLRGPNSPPPGMPLRHYDSRERLSNGER.

Residues Ser177, Ser182, and Ser254 each carry the phosphoserine modification. Residues 279 to 300 (SAQPSGEGNTTNHDEGHLMPQN) are disordered. Positions 280 to 289 (AQPSGEGNTT) are enriched in polar residues. Ser302 bears the Phosphoserine mark. The segment at 424–444 (PPPGMPLRHYDSRERLSNGER) is disordered. The span at 431-444 (RHYDSRERLSNGER) shows a compositional bias: basic and acidic residues.

As to quaternary structure, homodimer. Interacts with ABCB7, ABCB8/MITOSUR and ABCB10.

It is found in the cytoplasm. Its subcellular location is the mitochondrion. It carries out the reaction ATP + H2O = ADP + phosphate + H(+). Functionally, ATPase that regulates mitochondrial ABC transporters ABCB7, ABCB8/MITOSUR and ABCB10. Regulates mitochondrial ferric concentration and heme biosynthesis and plays a role in the maintenance of mitochondrial homeostasis and cell survival. The polypeptide is ATPase PAAT (Mus musculus (Mouse)).